A 430-amino-acid polypeptide reads, in one-letter code: Small ribosomal subunit protein uS9m (430 aa).

A mitochondrion-targeting transit peptide spans 1 to 34; that stretch reads MLSRLFLRHSNLRFVTLVSSKSNSQIFSSFIRPL. The tract at residues 32 to 97 is disordered; that stretch reads RPLSTNSSGG…GGEGKWPEEP (66 aa). A compositionally biased stretch (gly residues) spans 39-48; that stretch reads SGGGGNGDGN. Low complexity predominate over residues 68–79; it reads GPFSSDDSFGSS. Gly residues predominate over residues 80-91; sequence GVAGSGLPGGEG.

This sequence belongs to the universal ribosomal protein uS9 family. As to quaternary structure, interacts (via C terminus) with PIA2. Component of the mitochondrial ribosome small subunit. In terms of tissue distribution, expressed in root tips, young leaves, flowers and siliques.

The protein localises to the mitochondrion. Mitochondrial ribosomal protein required for central cell maturation. May work together with PIA2 in controlling female gametophyte development, possibly by regulating the expression of some mitochondrial proteins. The sequence is that of Small ribosomal subunit protein uS9m from Arabidopsis thaliana (Mouse-ear cress).